A 224-amino-acid polypeptide reads, in one-letter code: 7-cyano-7-deazaguanine synthase (224 aa).

Residue 14-24 (FSGGQDSTTCL) coordinates ATP. Residues cysteine 190, cysteine 198, cysteine 201, and cysteine 204 each coordinate Zn(2+).

Belongs to the QueC family. Zn(2+) is required as a cofactor.

The catalysed reaction is 7-carboxy-7-deazaguanine + NH4(+) + ATP = 7-cyano-7-deazaguanine + ADP + phosphate + H2O + H(+). It participates in purine metabolism; 7-cyano-7-deazaguanine biosynthesis. In terms of biological role, catalyzes the ATP-dependent conversion of 7-carboxy-7-deazaguanine (CDG) to 7-cyano-7-deazaguanine (preQ(0)). This Haemophilus ducreyi (strain 35000HP / ATCC 700724) protein is 7-cyano-7-deazaguanine synthase.